A 253-amino-acid polypeptide reads, in one-letter code: Isoprenyl transferase (253 aa).

The active site involves Asp32. Asp32 is a binding site for Mg(2+). Substrate-binding positions include 33–36 (GNGR), Trp37, Arg45, His49, and 77–79 (STE). The Proton acceptor role is filled by Asn80. Substrate contacts are provided by residues Trp81, Arg83, Arg200, and 206-208 (RLS). Glu219 contacts Mg(2+).

This sequence belongs to the UPP synthase family. As to quaternary structure, homodimer. Mg(2+) is required as a cofactor.

In terms of biological role, catalyzes the condensation of isopentenyl diphosphate (IPP) with allylic pyrophosphates generating different type of terpenoids. This chain is Isoprenyl transferase, found in Clostridium perfringens (strain 13 / Type A).